A 392-amino-acid polypeptide reads, in one-letter code: GDP-mannose transporter (392 aa).

A compositionally biased stretch (basic and acidic residues) spans 1-11 (MDDKKNEDLEM). The disordered stretch occupies residues 1–25 (MDDKKNEDLEMRNFNGRSSPSQRDP). Residues 1-45 (MDDKKNEDLEMRNFNGRSSPSQRDPFLAKPGAAAKRGNSAFDLSN) lie on the Cytoplasmic side of the membrane. Residues 46–66 (VTNSPGISILAYCLASISMTV) traverse the membrane as a helical segment. Topologically, residues 67–76 (TNKYCVSGSN) are lumenal. The helical transmembrane segment at 77–97 (WNLNFFYLAIQSVVCIIAIII) threads the bilayer. Topologically, residues 98 to 116 (CKQAGLITNLAPFDTKKAK) are cytoplasmic. A helical transmembrane segment spans residues 117-139 (TWFPISLLLVGMIYTSTKALQFL). Over 140–142 (SVP) the chain is Lumenal. A helical transmembrane segment spans residues 143–165 (VYTIFKNLTIIVIAYGEVLWFGG). Topologically, residues 166–171 (SVTPSA) are cytoplasmic. The chain crosses the membrane as a helical span at residues 172–191 (LFSFGLMVLSSVVAAWADIQ). Over 192–210 (HALYGGGAAQSAEAAAALS) the chain is Lumenal. A helical transmembrane segment spans residues 211–231 (TLNAGYAWMGMNVFCTAAYVL). Residues 232–246 (SMRKVIKKMNFKDWD) lie on the Cytoplasmic side of the membrane. Residues 247-267 (TMFYNNLLTIPVLFVCSFIFE) traverse the membrane as a helical segment. N-linked (GlcNAc...) asparagine glycans are attached at residues Asn-268 and Asn-273. The Lumenal segment spans residues 268 to 285 (NWSSENLTKNFPLETRNN). The helical transmembrane segment at 286–306 (LILGMIYSGLATIFISYCSAW) threads the bilayer. Residues 307–314 (CIRVTSST) are Cytoplasmic-facing. A helical membrane pass occupies residues 315-337 (TYSMVGALNKLPIAVSGLVFFAA). Residues 338-340 (PVT) lie on the Lumenal side of the membrane. A helical membrane pass occupies residues 341–360 (FGSVSAIFIGFVSGIVYAWA). Residues 361 to 392 (KVRQNQSKGNILPTTQPVMSASSQSNRDAAKA) are Cytoplasmic-facing. A disordered region spans residues 373-392 (PTTQPVMSASSQSNRDAAKA).

Belongs to the TPT transporter family. SLC35D subfamily. In terms of assembly, homooligomer.

It localises to the golgi apparatus membrane. The protein localises to the cytoplasmic vesicle membrane. Its subcellular location is the endoplasmic reticulum membrane. Its function is as follows. Involved in the import of GDP-mannose from the cytoplasm into the Golgi lumen. This chain is GDP-mannose transporter (gmt1), found in Botryotinia fuckeliana (strain B05.10) (Noble rot fungus).